The following is a 513-amino-acid chain: MEISWGRALWRNFLGQSPDWYKLALIIFLIVNPLIFLISPFVAGWLLVAEFIFTLAMALKCYPLLPGGLLAIEAVFIGMTSAEHVREEVAANLEVLLLLMFMVAGIYFMKQLLLFIFTRLLLSIRSKMLLSLSFCVAAAFLSAFLDALTVVAVVISVAVGFYGIYHRVASSRTEDTDLQDDSHIDKHYKVVLEQFRGFLRSLMMHAGVGTALGGVMTMVGEPQNLIIAKAAGWHFGDFFLRMSPVTVPVLICGLLTCLLVEKLRWFGYGETLPEKVREVLQQFDDQSRHQRTRQDKIRLIVQAIIGVWLVTALALHLAEVGLIGLSVIILATSLTGVTDEHAIGKAFTESLPFTALLTVFFSVVAVIIDQQLFSPIIQFVLQASEHAQLSLFYIFNGLLSSISDNVFVGTIYINEAKAAMESGAITLKQYELLAVAINTGTNLPSVATPNGQAAFLFLLTSALAPLIRLSYGRMVWMALPYTLVLTLVGLLCVEFTLAPVTEWFMQMGWIATL.

Transmembrane regions (helical) follow at residues 23–43 (LALI…PFVA), 52–72 (IFTL…LLAI), 97–117 (LLLM…LFIF), 120–140 (LLLS…AAAF), 144–164 (FLDA…FYGI), 202–222 (LMMH…VGEP), 238–258 (FFLR…LTCL), 303–323 (AIIG…VGLI), 348–368 (TESL…AVII), 391–411 (LFYI…VGTI), 447–467 (ATPN…APLI), and 475–495 (VWMA…CVEF).

The protein belongs to the NhaB Na(+)/H(+) (TC 2.A.34) antiporter family.

It localises to the cell inner membrane. It carries out the reaction 2 Na(+)(in) + 3 H(+)(out) = 2 Na(+)(out) + 3 H(+)(in). Its function is as follows. Na(+)/H(+) antiporter that extrudes sodium in exchange for external protons. This is Na(+)/H(+) antiporter NhaB from Shigella boydii serotype 18 (strain CDC 3083-94 / BS512).